The primary structure comprises 88 residues: DNA-directed RNA polymerase subunit omega (88 aa).

This sequence belongs to the RNA polymerase subunit omega family. As to quaternary structure, the RNAP catalytic core consists of 2 alpha, 1 beta, 1 beta' and 1 omega subunit. When a sigma factor is associated with the core the holoenzyme is formed, which can initiate transcription.

The enzyme catalyses RNA(n) + a ribonucleoside 5'-triphosphate = RNA(n+1) + diphosphate. Its function is as follows. Promotes RNA polymerase assembly. Latches the N- and C-terminal regions of the beta' subunit thereby facilitating its interaction with the beta and alpha subunits. In Salinispora arenicola (strain CNS-205), this protein is DNA-directed RNA polymerase subunit omega.